A 318-amino-acid chain; its full sequence is Ribose-phosphate pyrophosphokinase 2 (318 aa).

96–101 lines the ATP pocket; that stretch reads RQDKKD. Mg(2+) contacts are provided by D128, H130, D139, and D143. Residue H130 participates in ATP binding. The interval 212 to 227 is binding of phosphoribosylpyrophosphate; the sequence is KDRVAILVDDMADTCG.

Belongs to the ribose-phosphate pyrophosphokinase family. In terms of assembly, homodimer. The active form is probably a hexamer composed of 3 homodimers. Mg(2+) serves as cofactor.

The enzyme catalyses D-ribose 5-phosphate + ATP = 5-phospho-alpha-D-ribose 1-diphosphate + AMP + H(+). It participates in metabolic intermediate biosynthesis; 5-phospho-alpha-D-ribose 1-diphosphate biosynthesis; 5-phospho-alpha-D-ribose 1-diphosphate from D-ribose 5-phosphate (route I): step 1/1. Activated by magnesium and inorganic phosphate. Competitively or non-competitively inhibited by ADP, 2,3-bisphosphoglyceride or GDP. Catalyzes the synthesis of phosphoribosylpyrophosphate (PRPP) that is essential for nucleotide synthesis. This Homo sapiens (Human) protein is Ribose-phosphate pyrophosphokinase 2 (PRPS2).